The chain runs to 181 residues: Inner membrane-spanning protein YciB (181 aa).

The next 5 membrane-spanning stretches (helical) occupy residues Ile-22–Val-42, Met-50–Asp-70, Ile-80–Ile-100, Ile-118–Phe-138, and Phe-148–Val-168.

This sequence belongs to the YciB family.

The protein resides in the cell inner membrane. Its function is as follows. Plays a role in cell envelope biogenesis, maintenance of cell envelope integrity and membrane homeostasis. The polypeptide is Inner membrane-spanning protein YciB (Aliivibrio salmonicida (strain LFI1238) (Vibrio salmonicida (strain LFI1238))).